The chain runs to 878 residues: Leucine--tRNA ligase (878 aa).

Residues 43–53 (PYPSGRIHIGH) carry the 'HIGH' region motif. Residues 630 to 634 (KMSKS) carry the 'KMSKS' region motif. Lys633 serves as a coordination point for ATP.

The protein belongs to the class-I aminoacyl-tRNA synthetase family.

The protein localises to the cytoplasm. The enzyme catalyses tRNA(Leu) + L-leucine + ATP = L-leucyl-tRNA(Leu) + AMP + diphosphate. This Nitrobacter hamburgensis (strain DSM 10229 / NCIMB 13809 / X14) protein is Leucine--tRNA ligase.